A 105-amino-acid polypeptide reads, in one-letter code: uncharacterized protein (105 aa).

Positions 81 to 105 (NNNNKTITVDNNNNNNNNNNNNNNK) are disordered.

This is an uncharacterized protein from Dictyostelium discoideum (Social amoeba).